Here is a 250-residue protein sequence, read N- to C-terminus: MAGVAFGSFDDSFSLASLRAYLAEFISTLLFVFAGVGSAIAYAKLTSDAALDTPGLVAIAVCHGFALFVAVAIGANISGGHVNPAVTFGLAVGGQITVITGVFYWIAQLLGSTAACFLLKYVTGGLAVPTHSVAAGLGSIEGVVMEIIITFALVYTVYATAADPKKGSLGTIAPLAIGLIVGANILAAGPFSGGSMNPARSFGPAVAAGDFSGHWVYWVGPLIGGGLAGLIYGNVFMGSSEHVPLASADF.

M1 carries the post-translational modification N-acetylmethionine. At 1 to 20 (MAGVAFGSFDDSFSLASLRA) the chain is on the cytoplasmic side. An N-acetylalanine; in Aquaporin TIP2-1, N-terminally processed modification is found at A2. A helical membrane pass occupies residues 21-41 (YLAEFISTLLFVFAGVGSAIA). Over 42-54 (YAKLTSDAALDTP) the chain is Vacuolar. A helical membrane pass occupies residues 55 to 75 (GLVAIAVCHGFALFVAVAIGA). Residues 76–98 (NISGGHVNPAVTFGLAVGGQITV) lie on the Cytoplasmic side of the membrane. The NPA 1 signature appears at 83–85 (NPA). A helical membrane pass occupies residues 99-119 (ITGVFYWIAQLLGSTAACFLL). Residues 120–141 (KYVTGGLAVPTHSVAAGLGSIE) lie on the Vacuolar side of the membrane. A helical transmembrane segment spans residues 142 to 162 (GVVMEIIITFALVYTVYATAA). The Cytoplasmic portion of the chain corresponds to 163–168 (DPKKGS). A helical transmembrane segment spans residues 169–189 (LGTIAPLAIGLIVGANILAAG). At 190 to 215 (PFSGGSMNPARSFGPAVAAGDFSGHW) the chain is on the vacuolar side. The NPA 2 signature appears at 197–199 (NPA). A helical membrane pass occupies residues 216–236 (VYWVGPLIGGGLAGLIYGNVF). Residues 237–250 (MGSSEHVPLASADF) lie on the Cytoplasmic side of the membrane.

This sequence belongs to the MIP/aquaporin (TC 1.A.8) family. TIP (TC 1.A.8.10) subfamily. In terms of assembly, interacts with cucumber mosaic virus (CMV) Protein 1a. As to expression, strongly expressed in shoot, rosette, bolt and flowers. Also expressed in roots, flower buds and above ground.

The protein resides in the vacuole membrane. Aquaporin required to facilitate the transport of water from the vacuolar compartment to the cytoplasm. Does not promote glycerol permeability. Its function is impaired by Hg(2+). Transports urea in yeast cells and Xenopus laevis oocytes in a pH-independent manner. Transports methylammonium or ammonium in yeast cells and Xenopus laevis oocytes, preferentially at high medium pH. May participate in vacuolar compartmentation and detoxification of ammonium. The sequence is that of Aquaporin TIP2-1 (TIP2-1) from Arabidopsis thaliana (Mouse-ear cress).